A 182-amino-acid chain; its full sequence is Methionine-R-sulfoxide reductase B2, mitochondrial (182 aa).

The transit peptide at methionine 1–alanine 20 directs the protein to the mitochondrion. The MsrB domain occupies lysine 51–arginine 180. Residues cysteine 90, cysteine 93, cysteine 146, and cysteine 149 each coordinate Zn(2+). The active-site Nucleophile is cysteine 169.

This sequence belongs to the MsrB Met sulfoxide reductase family. In terms of assembly, interacts with DAOA; the interaction is direct. Requires Zn(2+) as cofactor. Ubiquitous. Detected in retina, ocular ciliary body, skeletal muscle, heart, colon, bone marrow, cerebellum, small intestine, fetal brain, fetal liver, kidney, spinal cord, lung, placenta and prostate.

It localises to the mitochondrion. It catalyses the reaction L-methionyl-[protein] + [thioredoxin]-disulfide + H2O = L-methionyl-(R)-S-oxide-[protein] + [thioredoxin]-dithiol. The catalysed reaction is [thioredoxin]-disulfide + L-methionine + H2O = L-methionine (R)-S-oxide + [thioredoxin]-dithiol. Functionally, methionine-sulfoxide reductase that specifically reduces methionine (R)-sulfoxide back to methionine. While in many cases, methionine oxidation is the result of random oxidation following oxidative stress, methionine oxidation is also a post-translational modification that takes place on specific residue. Upon oxidative stress, may play a role in the preservation of mitochondrial integrity by decreasing the intracellular reactive oxygen species build-up through its scavenging role, hence contributing to cell survival and protein maintenance. The polypeptide is Methionine-R-sulfoxide reductase B2, mitochondrial (MSRB2) (Homo sapiens (Human)).